Here is a 214-residue protein sequence, read N- to C-terminus: Glutathione S-transferase 1 (214 aa).

The region spanning 2-83 (APMKLYGAVM…YAARKNKPEL (82 aa)) is the GST N-terminal domain. Glutathione-binding positions include Ser12, 41-42 (HK), 54-55 (QV), and 67-68 (ES). The region spanning 88-214 (NLEEAAMVDV…KVAALMKPSA (127 aa)) is the GST C-terminal domain.

It belongs to the GST superfamily. Phi family. Homodimer or heterodimer of GST-I and GST-IV (=GST-II). As to expression, expressed in the stem and leaves, lower levels are seen in the pollen and endosperm.

The catalysed reaction is RX + glutathione = an S-substituted glutathione + a halide anion + H(+). Functionally, conjugation of reduced glutathione to a wide number of exogenous and endogenous hydrophobic electrophiles. Involved in the detoxification of certain herbicides. The chain is Glutathione S-transferase 1 (GST1) from Zea mays (Maize).